Here is a 1219-residue protein sequence, read N- to C-terminus: FK506-binding protein 15 (1219 aa).

An N-acetylmethionine modification is found at Met1. A phosphoserine mark is found at Ser14 and Ser23. A disordered region spans residues 41–66 (YTAPKQPKKGQGTAATGNQATPKTAP). Residues 53 to 66 (TAATGNQATPKTAP) show a composition bias toward polar residues. The important for function in growth cone organization stretch occupies residues 72-169 (PTILVATAVH…AVEFNKQVCI (98 aa)). At Lys92 the chain carries N6-acetyllysine. The PPIase FKBP-type domain occupies 197-290 (GDSLEVAYTG…VFEVEVRRVK (94 aa)). Positions 294–349 (DSGSDGHSVSSRDSAAPSPIPGADNLSADPVVSPPTSIPFKSGEPALRTKSNSLSE) are disordered. Residues Ser307, Ser311, Ser326, Ser344, Ser346, and Ser356 each carry the phosphoserine modification. The tract at residues 381-433 (PQLDSNDSEIEDVNTLQGGGQPVVTPSVQPSLHPAHPALPQMTSQAPQPSVTG) is disordered. Over residues 421 to 433 (QMTSQAPQPSVTG) the composition is skewed to polar residues. 3 coiled-coil regions span residues 522 to 789 (AVSK…TDQA), 818 to 878 (DEHL…GVEA), and 925 to 951 (TLQLLNQQEQEKEESSSEEEEEKAEER). Residue Ser619 is modified to Phosphoserine. The tract at residues 739-761 (LEKNLSERKKKSAQERSQAEEEI) is disordered. The disordered stretch occupies residues 931 to 1219 (QQEQEKEESS…DDDDDIDWLG (289 aa)). A phosphoserine mark is found at Ser939, Ser940, Ser941, and Ser956. Over residues 957 to 971 (QEQSASASSGQPQAP) the composition is skewed to low complexity. Ser979, Ser1024, Ser1056, Ser1061, Ser1065, and Ser1097 each carry phosphoserine. Residues 1090 to 1100 (QESSTRLSLTS) show a composition bias toward polar residues. At Thr1099 the chain carries Phosphothreonine. At Ser1114 the chain carries Phosphoserine. Residues 1123 to 1139 (LKKDDVTSSTGPHKELS) show a composition bias toward basic and acidic residues. 5 positions are modified to phosphoserine: Ser1158, Ser1161, Ser1162, Ser1164, and Ser1195. At Thr1203 the chain carries Phosphothreonine. A compositionally biased stretch (acidic residues) spans 1207 to 1219 (GDDDDDDDIDWLG).

This sequence belongs to the FKBP-type PPIase family. In terms of assembly, interacts with WIP and actin. Interacts with TBC1D23.

Its subcellular location is the cytoplasm. The protein localises to the cell projection. It is found in the axon. The protein resides in the early endosome. Functionally, may be involved in the cytoskeletal organization of neuronal growth cones. Seems to be inactive as a PPIase. Involved in the transport of early endosomes at the level of transition between microfilament-based and microtubule-based movement. The protein is FK506-binding protein 15 (FKBP15) of Homo sapiens (Human).